A 294-amino-acid chain; its full sequence is Ribosomal protein L11 methyltransferase (294 aa).

Positions 144, 165, 187, and 229 each coordinate S-adenosyl-L-methionine.

This sequence belongs to the methyltransferase superfamily. PrmA family.

The protein resides in the cytoplasm. The enzyme catalyses L-lysyl-[protein] + 3 S-adenosyl-L-methionine = N(6),N(6),N(6)-trimethyl-L-lysyl-[protein] + 3 S-adenosyl-L-homocysteine + 3 H(+). Methylates ribosomal protein L11. This Cellvibrio japonicus (strain Ueda107) (Pseudomonas fluorescens subsp. cellulosa) protein is Ribosomal protein L11 methyltransferase.